Consider the following 103-residue polypeptide: MYAIIETGGKQYKVEEGAVLFIEKLADVEGEVVTFDKVLLVSKDGKVTAGAPTVAGATVTGKVEKHGKAKKIIVYKYKAKKNYRRKQGHRQPFTKVVIEKINA.

This sequence belongs to the bacterial ribosomal protein bL21 family. In terms of assembly, part of the 50S ribosomal subunit. Contacts protein L20.

This protein binds to 23S rRNA in the presence of protein L20. This chain is Large ribosomal subunit protein bL21, found in Brevibacillus brevis (strain 47 / JCM 6285 / NBRC 100599).